The chain runs to 76 residues: SCIDFGGDCDGEKDDCQCCRSNGYCSCYNLFGYLKSGCKCEVGTSAEFRRICRRKAKQCYNSDPDKCVSVYKPKRR.

6 disulfide bridges follow: cysteine 2–cysteine 19, cysteine 9–cysteine 25, cysteine 16–cysteine 52, cysteine 18–cysteine 40, cysteine 27–cysteine 38, and cysteine 59–cysteine 67.

It belongs to the neurotoxin 04 (omega-agtx) family. 03 (type II/III omega-agtx) subfamily. In terms of tissue distribution, expressed by the venom gland.

Its subcellular location is the secreted. In terms of biological role, omega-agatoxins are antagonists of voltage-gated calcium channels. This toxin blocks calcium channels in insect central neurons but not at peripheral neuromuscular junctions. In vertebrates, it is broadly active against all high-threshold Cav1/CACNA1 channels and Cav2.2/CACNA1B channels. This is Omega-agatoxin-Aa3b from Agelenopsis aperta (North American funnel-web spider).